The primary structure comprises 185 residues: Ribosome-recycling factor (185 aa).

Belongs to the RRF family.

It localises to the cytoplasm. In terms of biological role, responsible for the release of ribosomes from messenger RNA at the termination of protein biosynthesis. May increase the efficiency of translation by recycling ribosomes from one round of translation to another. The sequence is that of Ribosome-recycling factor from Bacillus cereus (strain B4264).